Here is a 140-residue protein sequence, read N- to C-terminus: Nucleoside diphosphate kinase (140 aa).

6 residues coordinate ATP: Lys-11, Phe-59, Arg-87, Thr-93, Arg-104, and Asn-114. The active-site Pros-phosphohistidine intermediate is His-117.

The protein belongs to the NDK family. Homotetramer. Mg(2+) is required as a cofactor.

It is found in the cytoplasm. It catalyses the reaction a 2'-deoxyribonucleoside 5'-diphosphate + ATP = a 2'-deoxyribonucleoside 5'-triphosphate + ADP. The catalysed reaction is a ribonucleoside 5'-diphosphate + ATP = a ribonucleoside 5'-triphosphate + ADP. In terms of biological role, major role in the synthesis of nucleoside triphosphates other than ATP. The ATP gamma phosphate is transferred to the NDP beta phosphate via a ping-pong mechanism, using a phosphorylated active-site intermediate. This Azorhizobium caulinodans (strain ATCC 43989 / DSM 5975 / JCM 20966 / LMG 6465 / NBRC 14845 / NCIMB 13405 / ORS 571) protein is Nucleoside diphosphate kinase.